Consider the following 354-residue polypeptide: Selection and upkeep of intraepithelial T-cells protein 10 (354 aa).

Residues 1-52 form the signal peptide; sequence MFLRTQMEQSQADIFALIKPHFGVMESSASYLPGFFMTFLLLQTTVLTQAMS. One can recognise an Ig-like V-type domain in the interval 53–141; sequence LDIQINIQVP…TNREKKRSVV (89 aa). Topologically, residues 53-158 are extracellular; sequence LDIQINIQVP…SEYMSLMSNK (106 aa). Cys71 and Cys125 are disulfide-bonded. N-linked (GlcNAc...) asparagine glycosylation is present at Asn129. Residues 159-179 traverse the membrane as a helical segment; it reads FSCPLTYLFIIIFLNCLKGML. Over 180-209 the chain is Cytoplasmic; that stretch reads DFCCLKGKPVYFRELINKIKEVLNIKMRAC. The helical transmembrane segment at 210-230 threads the bilayer; the sequence is CTLIWEFLLIVLYIAFLPFYL. Over 231–252 the chain is Extracellular; it reads KFRSRASILDDAYPLHSNWLWD. A helical transmembrane segment spans residues 253-273; the sequence is ICIVLSVLMIFFTGLSLFLLW. The Cytoplasmic portion of the chain corresponds to 274–354; that stretch reads TLNCYGQMSY…RLDCSLNWKT (81 aa).

Belongs to the SKINT family. In terms of tissue distribution, expressed in skin and thymus.

It localises to the membrane. Its function is as follows. May act by engaging a cell surface molecule on immature T-cells in the embryonic thymus. The protein is Selection and upkeep of intraepithelial T-cells protein 10 (Skint10) of Mus musculus (Mouse).